Here is an 813-residue protein sequence, read N- to C-terminus: DNA gyrase subunit A (813 aa).

One can recognise a Topo IIA-type catalytic domain in the interval 38–504 (LPDVRDGLKP…EIEYLDVEDF (467 aa)). Residue Tyr-126 is the O-(5'-phospho-DNA)-tyrosine intermediate of the active site. A GyrA-box motif is present at residues 531-537 (QNRGGKG).

It belongs to the type II topoisomerase GyrA/ParC subunit family. Heterotetramer, composed of two GyrA and two GyrB chains. In the heterotetramer, GyrA contains the active site tyrosine that forms a transient covalent intermediate with DNA, while GyrB binds cofactors and catalyzes ATP hydrolysis.

The protein resides in the cytoplasm. It carries out the reaction ATP-dependent breakage, passage and rejoining of double-stranded DNA.. Functionally, a type II topoisomerase that negatively supercoils closed circular double-stranded (ds) DNA in an ATP-dependent manner to modulate DNA topology and maintain chromosomes in an underwound state. Negative supercoiling favors strand separation, and DNA replication, transcription, recombination and repair, all of which involve strand separation. Also able to catalyze the interconversion of other topological isomers of dsDNA rings, including catenanes and knotted rings. Type II topoisomerases break and join 2 DNA strands simultaneously in an ATP-dependent manner. The polypeptide is DNA gyrase subunit A (Treponema pallidum (strain Nichols)).